We begin with the raw amino-acid sequence, 529 residues long: 2-(3-amino-3-carboxypropyl)histidine synthase subunit 2-2 (529 aa).

C130, C151, and C366 together coordinate [4Fe-4S] cluster.

The protein belongs to the DPH1/DPH2 family. DPH2 subfamily. In terms of assembly, component of the 2-(3-amino-3-carboxypropyl)histidine synthase complex composed of DPH1, DPH2, DPH3 and a NADH-dependent reductase, predominantly CBR1. The cofactor is [4Fe-4S] cluster.

The protein localises to the cytoplasm. It functions in the pathway protein modification; peptidyl-diphthamide biosynthesis. Required for the first step of diphthamide biosynthesis, a post-translational modification of histidine which occurs in elongation factor 2. DPH1 and DPH2 transfer a 3-amino-3-carboxypropyl (ACP) group from S-adenosyl-L-methionine (SAM) to a histidine residue, the reaction is assisted by a reduction system comprising DPH3 and a NADH-dependent reductase, predominantly CBR1. Facilitates the reduction of the catalytic iron-sulfur cluster found in the DPH1 subunit. This Candida albicans (strain SC5314 / ATCC MYA-2876) (Yeast) protein is 2-(3-amino-3-carboxypropyl)histidine synthase subunit 2-2.